The following is a 402-amino-acid chain: S-adenosylmethionine synthase (402 aa).

137 to 142 (GQGSAD) is a binding site for ATP.

The protein belongs to the AdoMet synthase 2 family. Requires Mg(2+) as cofactor.

The enzyme catalyses L-methionine + ATP + H2O = S-adenosyl-L-methionine + phosphate + diphosphate. It functions in the pathway amino-acid biosynthesis; S-adenosyl-L-methionine biosynthesis; S-adenosyl-L-methionine from L-methionine: step 1/1. Its function is as follows. Catalyzes the formation of S-adenosylmethionine from methionine and ATP. The chain is S-adenosylmethionine synthase from Pyrobaculum islandicum (strain DSM 4184 / JCM 9189 / GEO3).